Consider the following 200-residue polypeptide: A-type ATP synthase subunit E (200 aa).

It belongs to the V-ATPase E subunit family. Has multiple subunits with at least A(3), B(3), C, D, E, F, H, I and proteolipid K(x).

It localises to the cell membrane. Its function is as follows. Component of the A-type ATP synthase that produces ATP from ADP in the presence of a proton gradient across the membrane. The polypeptide is A-type ATP synthase subunit E (Aeropyrum pernix (strain ATCC 700893 / DSM 11879 / JCM 9820 / NBRC 100138 / K1)).